A 236-amino-acid chain; its full sequence is WUSCHEL-related homeobox 4 (236 aa).

Residues 88-152 (AGTTRWNPSA…NHKARERQKQ (65 aa)) constitute a DNA-binding region (homeobox; WUS-type). The tract at residues 169 to 188 (PATANETKEAPEKKEKDVED) is disordered. The segment covering 174 to 187 (ETKEAPEKKEKDVE) has biased composition (basic and acidic residues).

This sequence belongs to the WUS homeobox family.

The protein resides in the nucleus. Its function is as follows. Transcription factor which may be involved in developmental processes. The protein is WUSCHEL-related homeobox 4 (WOX4) of Oryza sativa subsp. indica (Rice).